We begin with the raw amino-acid sequence, 319 residues long: High mobility group B protein 10 (319 aa).

The span at 1–13 (MSTDISPPYSQTH) shows a compositional bias: polar residues. Residues 1-25 (MSTDISPPYSQTHVEPVNGYPSDNK) are disordered. The ARID domain maps to 40–131 (VRNSALFWEK…FLFQLEHVYY (92 aa)). Residues 203-220 (PSQSQQTMETPSAIVQSS) are compositionally biased toward polar residues. The disordered stretch occupies residues 203–230 (PSQSQQTMETPSAIVQSSQRRHRKKSKL). Residues 238-305 (PKCHRSGYNF…RYRIEMLEYK (68 aa)) constitute a DNA-binding region (HMG box).

In terms of tissue distribution, ubiquitously expressed.

It localises to the nucleus. In terms of biological role, binds preferentially DNA with A/T-rich content. The sequence is that of High mobility group B protein 10 (HMGB10) from Arabidopsis thaliana (Mouse-ear cress).